A 38-amino-acid chain; its full sequence is Large ribosomal subunit protein bL36 (38 aa).

The protein belongs to the bacterial ribosomal protein bL36 family.

This Proteus mirabilis (strain HI4320) protein is Large ribosomal subunit protein bL36.